We begin with the raw amino-acid sequence, 340 residues long: Short-chain dehydrogenase/reductase prx1 (340 aa).

Residues Ile60, Lys84, Asp104, Asn131, and Lys162 each contribute to the NADP(+) site. The Proton donor role is filled by Ser184. 2 residues coordinate NADP(+): Tyr210 and Lys214. Tyr210 (proton acceptor) is an active-site residue. Catalysis depends on Lys214, which acts as the Lowers pKa of active site Tyr.

The protein belongs to the short-chain dehydrogenases/reductases (SDR) family.

Its pathway is sesquiterpene biosynthesis. Its function is as follows. Short-chain dehydrogenase/reductase; part of the gene cluster that mediates the biosynthesis of PR-toxin, a bicyclic sesquiterpene belonging to the eremophilane class and acting as a mycotoxin. The first step of the pathway is catalyzed by the aristolochene synthase which performs the cyclization of trans,trans-farnesyl diphosphate (FPP) to the bicyclic sesquiterpene aristolochene. Following the formation of aristolochene, the non-oxygenated aristolochene is converted to the trioxygenated intermediate eremofortin B, via 7-epi-neopetasone. This conversion appears to involve three enzymes, a hydroxysterol oxidase-like enzyme, the quinone-oxidase prx3 that forms the quinone-type-structure in the bicyclic nucleus of aristolochene with the C8-oxo group and the C-3 hydroxyl group, and the P450 monooxygenase ORF6 that introduces the epoxide at the double bond between carbons 1 and 2. No monoxy or dioxy-intermediates have been reported to be released to the broth, so these three early oxidative reactions may be coupled together. Eremofortin B is further oxidized by another P450 monooxygenase, that introduces a second epoxide between carbons 7 and 11 prior to acetylation to eremofortin A by the acetyltransferase ORF8. The second epoxidation may be performed by a second P450 monooxygenase. After the acetylation step, eremofortin A is converted to eremofortin C and then to PR-toxin. First the conversion of eremofortin A to eremofortin C proceeds by oxidation of the side chain of the molecule at C-12 and is catalyzed by the short-chain oxidoreductase prx1. The cytochrome P450 monooxygenase ORF6 is probably also involved in this step. The primary alcohol formed at C-12 is finally oxidized by the short-chain alcohol dehydrogenase prx4 that forms PR-toxin. In Penicillium roqueforti (strain FM164), this protein is Short-chain dehydrogenase/reductase prx1.